The sequence spans 224 residues: Proteasome subunit beta (224 aa).

The propeptide at 1-6 is removed in mature form; by autocatalysis; it reads MDVMKG. Thr7 (nucleophile) is an active-site residue.

It belongs to the peptidase T1B family. The 20S proteasome core is composed of 14 alpha and 14 beta subunits that assemble into four stacked heptameric rings, resulting in a barrel-shaped structure. The two inner rings, each composed of seven catalytic beta subunits, are sandwiched by two outer rings, each composed of seven alpha subunits. The catalytic chamber with the active sites is on the inside of the barrel. Has a gated structure, the ends of the cylinder being occluded by the N-termini of the alpha-subunits. Is capped at one or both ends by the proteasome regulatory ATPase, PAN.

The protein resides in the cytoplasm. It catalyses the reaction Cleavage of peptide bonds with very broad specificity.. The formation of the proteasomal ATPase PAN-20S proteasome complex, via the docking of the C-termini of PAN into the intersubunit pockets in the alpha-rings, triggers opening of the gate for substrate entry. Interconversion between the open-gate and close-gate conformations leads to a dynamic regulation of the 20S proteasome proteolysis activity. Functionally, component of the proteasome core, a large protease complex with broad specificity involved in protein degradation. The M.jannaschii proteasome is able to cleave oligopeptides after Glu, Asp, Tyr, Phe, Trp, slightly after Arg, but not after Ala. Thus, displays caspase-like and chymotrypsin-like activities and low level of trypsin-like activity. The sequence is that of Proteasome subunit beta from Methanocaldococcus jannaschii (strain ATCC 43067 / DSM 2661 / JAL-1 / JCM 10045 / NBRC 100440) (Methanococcus jannaschii).